We begin with the raw amino-acid sequence, 1827 residues long: Phenolphthiocerol/phthiocerol polyketide synthase subunit C (1827 aa).

The Ketosynthase family 3 (KS3) domain occupies 35–461 (CEPVAVVGIG…GTNAHVVVEQ (427 aa)). Catalysis depends on for beta-ketoacyl synthase activity residues Cys207, His342, and His383. An acyltransferase region spans residues 566–876 (VFVYSGQGSQ…LAAVGVAASE (311 aa)). The active-site For malonyltransferase activity is the Ser654. The N-terminal hotdog fold stretch occupies residues 910–1037 (HPLLGAHIEM…AKVEQSPREC (128 aa)). Positions 910–1076 (HPLLGAHIEM…QHHGPAFAAL (167 aa)) are dehydratase. Residues 910–1198 (HPLLGAHIEM…LRRVERRAVP (289 aa)) form the PKS/mFAS DH domain. His942 functions as the Proton acceptor; for dehydratase activity in the catalytic mechanism. Residues 1050-1198 (GTTVSPADFY…LRRVERRAVP (149 aa)) form a C-terminal hotdog fold region. The Proton donor; for dehydratase activity role is filled by Asp1111. The segment at 1439-1617 (ASYVVTGGLG…VINWGPWSEV (179 aa)) is beta-ketoacyl reductase. An NADP(+)-binding site is contributed by 1440–1485 (SYVVTGGLGGLGLVVARWLVDRGAGRVVLGGRSDPTDEQCNVLAEL). One can recognise a Carrier domain in the interval 1706 to 1785 (RAVTERMCAR…DLTADLMRQL (80 aa)). Ser1745 carries the O-(pantetheine 4'-phosphoryl)serine modification.

NADP(+) serves as cofactor. Pantetheine 4'-phosphate is required as a cofactor.

The catalysed reaction is icosanoyl-[(phenol)carboxyphthiodiolenone synthase] + 2 (S)-methylmalonyl-CoA + 3 malonyl-CoA + 5 NADPH + 10 H(+) = C32-carboxyphthiodiolenone-[(phenol)carboxyphthiodiolenone synthase] + 5 CO2 + 5 NADP(+) + 5 CoA + 2 H2O. It catalyses the reaction docosanoyl-[(phenol)carboxyphthiodiolenone synthase] + 2 (S)-methylmalonyl-CoA + 3 malonyl-CoA + 5 NADPH + 10 H(+) = C34-carboxyphthiodiolenone-[(phenol)carboxyphthiodiolenone synthase] + 5 CO2 + 5 NADP(+) + 5 CoA + 2 H2O. It carries out the reaction 17-(4-hydroxyphenyl)heptadecanoyl-[(phenol)carboxyphthiodiolenone synthase] + 2 (S)-methylmalonyl-CoA + 3 malonyl-CoA + 5 NADPH + 10 H(+) = C35-(phenol)carboxyphthiodiolenone-[(phenol)carboxyphthiodiolenone synthase] + 5 CO2 + 5 NADP(+) + 5 CoA + 2 H2O. The enzyme catalyses 19-(4-hydroxyphenyl)nonadecanoyl-[(phenol)carboxyphthiodiolenone synthase] + 2 (S)-methylmalonyl-CoA + 3 malonyl-CoA + 5 NADPH + 10 H(+) = C37-(phenol)carboxyphthiodiolenone-[(phenol)carboxyphthiodiolenone synthase] + 5 CO2 + 5 NADP(+) + 5 CoA + 2 H2O. The protein operates within lipid metabolism; fatty acid biosynthesis. Functionally, part of the PpsABCDE complex involved in the biosynthesis of the lipid core common to phthiocerols and phenolphthiocerols by successive additions of malonyl-CoA or methylmalonyl-CoA extender units. PpsA can accept as substrate the activated forms of either icosanoyl (C20), docosanoyl (C22) or lignoceroyl (C24) groups from FadD26, or a (4-hydroxyphenyl)-C17 or (4-hydroxyphenyl)-C19 fatty acyl from FadD29. PpsA initiates the biosynthesis and extends its substrate using a malonyl-CoA extender unit. The PpsB and PpsC proteins add the second and third malonyl-CoA extender units. PpsD adds an (R)-methylmalonyl unit and PpsE adds a second (R)-methylmalonyl unit. The incorporation of the methylmalonyl units results in formation of two branched methyl groups in the elongated product. The polypeptide is Phenolphthiocerol/phthiocerol polyketide synthase subunit C (ppsD) (Mycobacterium bovis (strain ATCC BAA-935 / AF2122/97)).